Reading from the N-terminus, the 607-residue chain is Autophagy-related protein 16-1 (607 aa).

Residues 13 to 43 form an interaction with ATG5 region; sequence WKRHIAEELRRRDRLQRQAFEEIILQYTKLL. Residues 79 to 230 adopt a coiled-coil conformation; it reads DSQLQEMAQL…QKELAEAAKE (152 aa). A Phosphoserine modification is found at Ser139. The interval 207-230 is WIPI2-binding; that stretch reads AENEKDSRRRQARLQKELAEAAKE. The tract at residues 230–242 is RB1CC1-binding; sequence EPLPVEQDDDIEV. Residues Ser269 and Ser287 each carry the phosphoserine modification. The Caspase cleavage motif lies at 296–299; that stretch reads DIMD. 7 WD repeats span residues 320–359, 364–403, 406–445, 447–484, 486–525, 532–573, and 575–607; these read AHDG…CEFK, GSNA…LRHT, GHSG…CIKT, FAGS…VVRE, ELLG…VKQT, KCGS…KVLS, and QHSS…WAQP.

Belongs to the WD repeat ATG16 family. In terms of assembly, homodimer. Homooligomer. Heterooligomer with ATG16L2. Interacts with WIPI1. Interacts with WIPI2. Interacts with RB1CC1; the interaction is required for ULK1 complex-dependent autophagy. Interacts with ATG5. Part of the minor complex composed of 4 sets of ATG12-ATG5 and ATG16L1 (400 kDa); this complex interacts with ATG3 leading to disruption of ATG7 interaction and promotion of ATG8-like proteins lipidation. Part of the major complex composed of 8 sets of ATG12-ATG5 and ATG16L1 (800 kDa). Interacts with RAB33B (GTP- and GDP-bound forms); the complex consists of a tetramer where two RAB33B molecules bind independently one molecule of the ATG16L1 homodimer; the interaction promotes ATG12-ATG5-ATG16L1 complex recruitment to phagophores. Interacts (via WD repeats) with TMEM59; the interaction mediates unconventional autophagic activity of TMEM59. Interacts with TLR2. Interacts (via WD repeats) with MEFV. Interacts (via N-terminal) with CLTC. Interacts with NOD1. Interacts with NOD2. Interacts with TUFM. Interacts with TRIM16. Interacts (via WD repeats) with SPATA33. Interacts with Irgm1. Post-translationally, proteolytic cleavage by activated CASP3 leads to degradation and may regulate autophagy upon cellular stress and apoptotic stimuli. Phosphorylation at Ser-139 promotes association with the ATG12-ATG5 conjugate to form the ATG12-ATG5-ATG16L1 complex. As to expression, widely expressed. Expressed in the testis and sperm midpiece (at protein level). In terms of tissue distribution, expressed in liver. Highly expressed in liver. As to expression, expressed in brain.

It is found in the cytoplasm. It localises to the preautophagosomal structure membrane. The protein localises to the endosome membrane. The protein resides in the lysosome membrane. In terms of biological role, plays an essential role in both canonical and non-canonical autophagy: interacts with ATG12-ATG5 to mediate the lipidation to ATG8 family proteins (MAP1LC3A, MAP1LC3B, MAP1LC3C, GABARAPL1, GABARAPL2 and GABARAP). Acts as a molecular hub, coordinating autophagy pathways via distinct domains that support either canonical or non-canonical signaling. During canonical autophagy, interacts with ATG12-ATG5 to mediate the conjugation of phosphatidylethanolamine (PE) to ATG8 proteins, to produce a membrane-bound activated form of ATG8. Thereby, controls the elongation of the nascent autophagosomal membrane. As part of the ATG8 conjugation system with ATG5 and ATG12, required for recruitment of LRRK2 to stressed lysosomes and induction of LRRK2 kinase activity in response to lysosomal stress. Also involved in non-canonical autophagy, a parallel pathway involving conjugation of ATG8 proteins to single membranes at endolysosomal compartments, probably by catalyzing conjugation of phosphatidylserine (PS) to ATG8. Non-canonical autophagy plays a key role in epithelial cells to limit lethal infection by influenza A (IAV) virus. Regulates mitochondrial antiviral signaling (MAVS)-dependent type I interferon (IFN-I) production. Negatively regulates NOD1- and NOD2-driven inflammatory cytokine response. Instead, promotes an autophagy-dependent antibacterial pathway together with NOD1 or NOD2. Plays a role in regulating morphology and function of Paneth cell. This Mus musculus (Mouse) protein is Autophagy-related protein 16-1.